The primary structure comprises 400 residues: Acyl-CoA dehydrogenase FadE26 (400 aa).

FAD contacts are provided by residues 127-130 (IGYS), threonine 136, and serine 162. Glutamate 247 acts as the Proton acceptor in catalysis. An FAD-binding site is contributed by 380-382 (TNE).

This sequence belongs to the acyl-CoA dehydrogenase family. In terms of assembly, heterotetramer (dimer of heterodimers) composed of FadE26 and FadE27. It depends on FAD as a cofactor.

It carries out the reaction (25S)-3-oxocholest-4-en-26-oyl-CoA + A = 3-oxo-cholest-4,24-dien-26-oyl-CoA + AH2. It functions in the pathway steroid metabolism; cholesterol degradation. Its activity is regulated as follows. Uncompetitively inhibited by high concentration of 3-OCS-CoA. In terms of biological role, involved in the first cycle of side chain dehydrogenation in the beta-oxidation of cholesterol catabolism. It contributes partly to the virulence by increasing the efficiency of beta-oxidation. Catalyzes the dehydrogenation of acyl-CoA ester side chains of (25S)-3-oxo-cholest-4-en-26-oyl-CoA (3-OCS-CoA) to yield (24E)-3-oxo-cholest-4,24-dien-26-oyl-CoA. Also able to dehydrogenate steroyl-CoA such as 3-oxo-chol-4-en-24-oyl-CoA (3-OCO-CoA) as well as 3-oxo-4-pregnene-20-carboxyl-CoA (3-OPC-CoA). It dehydrogenates only (25S)-OCS-CoA diastereomer. This Mycobacterium tuberculosis (strain ATCC 25618 / H37Rv) protein is Acyl-CoA dehydrogenase FadE26 (fadE26).